The sequence spans 273 residues: 29 kDa ribonucleoprotein A, chloroplastic (273 aa).

Residues methionine 1–lysine 58 constitute a chloroplast transit peptide. The RRM 1 domain occupies leucine 87–proline 165. The tract at residues arginine 156–glycine 181 is disordered. Positions proline 166–serine 187 are linker (Gly-rich). One can recognise an RRM 2 domain in the interval asparagine 188–alanine 266.

It is found in the plastid. Its subcellular location is the chloroplast. Could be involved in splicing and/or processing of chloroplast RNA's. The sequence is that of 29 kDa ribonucleoprotein A, chloroplastic from Nicotiana sylvestris (Wood tobacco).